Consider the following 321-residue polypeptide: MIIFTLRRILLLIVTLFLLTFVGFSLSYFTPHAPLQGASLWNAWVFWFNGLIHWDFGVSSINGQPIAEQLKEVFPATMELCILAFGFALIVGIPVGMIAGITRHKWQDNLINAIALLGFSIPVFWLALLLTLFCSLTLGWLPVSGRFDLLYEVKPITGFALIDAWLSDSPWRDEMIMSAIRHMILPVITLSVAPTTEVIRLMRISTIEVYDQNYVKAAATRGLSRFTILRRHVLHNALPPVIPRLGLQFSTMLTLAMITEMVFSWPGLGRWLINAIRQQDYAAISAGVMVCGSLVIIVNVISDILGAMANPLKHKEWYALR.

Over 1-8 (MIIFTLRR) the chain is Cytoplasmic. A helical transmembrane segment spans residues 9–29 (ILLLIVTLFLLTFVGFSLSYF). Residues 30–80 (TPHAPLQGASLWNAWVFWFNGLIHWDFGVSSINGQPIAEQLKEVFPATMEL) are Periplasmic-facing. Residues 74–302 (FPATMELCIL…SLVIIVNVIS (229 aa)) enclose the ABC transmembrane type-1 domain. A helical transmembrane segment spans residues 81 to 101 (CILAFGFALIVGIPVGMIAGI). At 102–112 (TRHKWQDNLIN) the chain is on the cytoplasmic side. Residues 113 to 133 (AIALLGFSIPVFWLALLLTLF) traverse the membrane as a helical segment. Residues 134-174 (CSLTLGWLPVSGRFDLLYEVKPITGFALIDAWLSDSPWRDE) are Periplasmic-facing. A helical transmembrane segment spans residues 175–195 (MIMSAIRHMILPVITLSVAPT). The Cytoplasmic portion of the chain corresponds to 196 to 248 (TEVIRLMRISTIEVYDQNYVKAAATRGLSRFTILRRHVLHNALPPVIPRLGLQ). A helical transmembrane segment spans residues 249–269 (FSTMLTLAMITEMVFSWPGLG). Residues 270–280 (RWLINAIRQQD) lie on the Periplasmic side of the membrane. The chain crosses the membrane as a helical span at residues 281–301 (YAAISAGVMVCGSLVIIVNVI). The Cytoplasmic portion of the chain corresponds to 302–321 (SDILGAMANPLKHKEWYALR).

Belongs to the binding-protein-dependent transport system permease family. OppBC subfamily.

The protein resides in the cell inner membrane. Part of a putrescine export transport system, does not play a role in resistance to antimicrobial peptides. The sequence is that of Putrescine export system permease protein SapB (sapB) from Escherichia coli (strain K12).